A 431-amino-acid chain; its full sequence is Adenylosuccinate synthetase (431 aa).

GTP is bound by residues 13 to 19 and 41 to 43; these read GDEGKGK and GHT. D14 functions as the Proton acceptor in the catalytic mechanism. The Mg(2+) site is built by D14 and G41. Residues 14–17, 39–42, T130, R144, Q225, T240, and R304 each bind IMP; these read DEGK and NAGH. H42 functions as the Proton donor in the catalytic mechanism. 300 to 306 serves as a coordination point for substrate; sequence ATTGRKR. Residues R306, 332–334, and 415–417 each bind GTP; these read KLD and STG.

It belongs to the adenylosuccinate synthetase family. In terms of assembly, homodimer. Mg(2+) serves as cofactor.

It is found in the cytoplasm. The enzyme catalyses IMP + L-aspartate + GTP = N(6)-(1,2-dicarboxyethyl)-AMP + GDP + phosphate + 2 H(+). The protein operates within purine metabolism; AMP biosynthesis via de novo pathway; AMP from IMP: step 1/2. Plays an important role in the de novo pathway of purine nucleotide biosynthesis. Catalyzes the first committed step in the biosynthesis of AMP from IMP. This is Adenylosuccinate synthetase from Shewanella denitrificans (strain OS217 / ATCC BAA-1090 / DSM 15013).